A 98-amino-acid chain; its full sequence is U-scoloptoxin(16)-Er9a (98 aa).

The signal sequence occupies residues 1–24 (MVSYLCMSVSSGWLSIGKIAIKDG).

This sequence belongs to the scoloptoxin-16 family. In terms of processing, contains 4 disulfide bonds. Expressed by the venom gland.

It localises to the secreted. The polypeptide is U-scoloptoxin(16)-Er9a (Ethmostigmus rubripes (Giant centipede)).